The sequence spans 284 residues: MEMO1 family protein MmarC5_0191 (284 aa).

This sequence belongs to the MEMO1 family.

This Methanococcus maripaludis (strain C5 / ATCC BAA-1333) protein is MEMO1 family protein MmarC5_0191.